The following is a 623-amino-acid chain: Pentatricopeptide repeat-containing protein At5g15340, mitochondrial (623 aa).

A mitochondrion-targeting transit peptide spans 1-16; it reads MKCLSYQKVRLLLRHC. PPR repeat units follow at residues 42–72, 75–109, 110–144, 145–179, 180–206, 207–237, 243–277, 285–319, 320–346, 350–384, and 385–419; these read RSYLSNALFQFYASSGEMVTAQKLFDEIPLS, DNVDWTTLLSSFSRYGLLVNSMKLFVEMRRKRVEI, DDVSVVCLFGVCAKLEDLGFAQQGHGVAVKMGVLT, SVKVCNALMDMYGKCGLVSEVKRIFEELEEKSVVS, WTVVLDTVVKWEGLERGREVFHEMPER, NAVAWTVMVAGYLGAGFTREVLELLAEMVFR, NFVTLCSMLSACAQSGNLVVGRWVHVYALKKEMMM, DVMVGTALVDMYAKCGNIDSSMNVFRLMRKRNVVT, WNALFSGLAMHGKGRMVIDMFPQMIRE, DDLTFTAVLSACSHSGIVDEGWRCFHSLRFYGLEP, and KVDHYACMVDLLGRAGLIEEAEILMREMPVPPNEV. Residues 420-495 are type E motif; sequence VLGSLLGSCS…IPGLSSIYVN (76 aa). Positions 496 to 526 are type E(+) motif; it reads DSVHRFSSGDRSHPRTKEIYLKLNEVIERIR. Residues 527–623 are type DYW motif; sequence SAGYVPDVSG…GGSCSCSDYW (97 aa).

Belongs to the PPR family. PCMP-H subfamily.

The protein localises to the mitochondrion. This chain is Pentatricopeptide repeat-containing protein At5g15340, mitochondrial (PCMP-H91), found in Arabidopsis thaliana (Mouse-ear cress).